We begin with the raw amino-acid sequence, 200 residues long: Lipopolysaccharide core heptose(II)-phosphate phosphatase (200 aa).

Positions 1-25 (MLAFCRSSLKSKKYFIILLALAAIA) are cleaved as a signal peptide.

It belongs to the phosphoglycerate mutase family. Ais subfamily.

It localises to the periplasm. The protein operates within bacterial outer membrane biogenesis; lipopolysaccharide metabolism. Functionally, catalyzes the dephosphorylation of heptose(II) of the outer membrane lipopolysaccharide core. The chain is Lipopolysaccharide core heptose(II)-phosphate phosphatase from Escherichia coli O17:K52:H18 (strain UMN026 / ExPEC).